A 140-amino-acid chain; its full sequence is Zinc finger SWIM domain-containing protein 7 (140 aa).

Residues 66–114 (YQVLGSSSKTYTCLASCHYCSCPAFAFSVLRKSDSILCKHLLAVYLSQV) form an SWIM-type zinc finger.

This sequence belongs to the SWS1 family. Interacts with RAD51D and XRCC3; involved in homologous recombination repair. Interacts with SWSAP1; they form a functional complex involved in homologous recombination repair and stabilize each other. Expressed in ovary and testis.

It localises to the nucleus. Involved in early stages of the homologous recombination repair (HRR) pathway of double-stranded DNA breaks arising during DNA replication or induced by DNA-damaging agents. Required for meiotic progression, hence for fertility. In Homo sapiens (Human), this protein is Zinc finger SWIM domain-containing protein 7 (ZSWIM7).